A 247-amino-acid chain; its full sequence is PF03932 family protein CutC (247 aa).

Residues 205–222 show a composition bias toward polar residues; that stretch reads KSTRPSLMESNSSAQMGS. The tract at residues 205–226 is disordered; sequence KSTRPSLMESNSSAQMGSNDVD.

This sequence belongs to the CutC family.

It is found in the cytoplasm. In Vibrio atlanticus (strain LGP32) (Vibrio splendidus (strain Mel32)), this protein is PF03932 family protein CutC.